Reading from the N-terminus, the 289-residue chain is ATP synthase gamma chain (289 aa).

Belongs to the ATPase gamma chain family. In terms of assembly, F-type ATPases have 2 components, CF(1) - the catalytic core - and CF(0) - the membrane proton channel. CF(1) has five subunits: alpha(3), beta(3), gamma(1), delta(1), epsilon(1). CF(0) has three main subunits: a, b and c.

The protein resides in the cell inner membrane. In terms of biological role, produces ATP from ADP in the presence of a proton gradient across the membrane. The gamma chain is believed to be important in regulating ATPase activity and the flow of protons through the CF(0) complex. This chain is ATP synthase gamma chain, found in Aromatoleum aromaticum (strain DSM 19018 / LMG 30748 / EbN1) (Azoarcus sp. (strain EbN1)).